A 1201-amino-acid chain; its full sequence is Putative disease resistance protein At4g19050 (1201 aa).

33-40 (GEAGIGKT) serves as a coordination point for ATP. LRR repeat units lie at residues 469–491 (KLRV…SGLQ), 492–514 (GLHV…FFKN), 517–539 (QLQS…EKLS), 540–562 (MLRC…IVET), 680–701 (ELRI…IADV), 703–725 (NLNK…EKLT), 726–748 (HLEV…FGEM), 750–771 (YLHE…ISEL), 773–795 (NLKE…EKLT), 796–818 (NLEI…FENL), 820–841 (CLHK…ISEL), 843–865 (NLKE…EKLT), 866–888 (HLVI…FESM), and 890–911 (YLCE…PKQS). The segment covering 1162–1180 (DEPRIGARITDEISEDQPH) has biased composition (basic and acidic residues). The tract at residues 1162–1201 (DEPRIGARITDEISEDQPHKNTIGPETQTPTQPTKATDTV) is disordered. Positions 1185-1201 (GPETQTPTQPTKATDTV) are enriched in polar residues.

This sequence belongs to the disease resistance NB-LRR family.

Its function is as follows. Potential disease resistance protein. The sequence is that of Putative disease resistance protein At4g19050 from Arabidopsis thaliana (Mouse-ear cress).